A 395-amino-acid chain; its full sequence is XK-related protein 8 (395 aa).

Residues 1–12 (MPWSSRGALLRD) are Cytoplasmic-facing. A helical membrane pass occupies residues 13–33 (LVLGVLGTAAFLLDLGTDLWA). The Extracellular segment spans residues 34–47 (AVQYALGGRYLWAA). The helical transmembrane segment at 48 to 68 (LVLALLGLASVALQLFSWLWL) threads the bilayer. Residues 69–158 (RADPAGLHGS…VLAIMLQSGR (90 aa)) are Cytoplasmic-facing. A helical transmembrane segment spans residues 159-179 (AEYYQWVGICTSFLGISWALL). Residues 180–200 (DYHRALRTCLPSRPLLGLGSS) lie on the Extracellular side of the membrane. Residues 201–221 (VIYFLWNLLLLWPRVLAVALF) form a helical membrane-spanning segment. Topologically, residues 222-223 (SA) are cytoplasmic. Residues 224-244 (LFPSYVALHFLGLWLVLLLWV) form a helical membrane-spanning segment. The Extracellular portion of the chain corresponds to 245-258 (WLQGTDFMPDPSSE). A helical membrane pass occupies residues 259 to 279 (WLYQVTVATILYFSWFNVAEG). The Cytoplasmic portion of the chain corresponds to 280 to 284 (RTRGR). Residues 285–305 (AIIHFAFLLSDSILLVATWVT) form a helical membrane-spanning segment. Residues 306–312 (HSSWLPS) lie on the Extracellular side of the membrane. The chain crosses the membrane as a helical span at residues 313-333 (GIPLQLWLPVGCGCFFLGLAL). The Cytoplasmic segment spans residues 334–395 (RLVYYHWLHP…KDEAALPVKG (62 aa)). The residue at position 362 (Ser362) is a Phosphoserine. The residue at position 375 (Thr375) is a Phosphothreonine.

Belongs to the XK family. Interacts with BSG and NPTN; which act as chaperones to localize XKR8 at the cell membrane. In terms of assembly, homodimer. Post-translationally, undergoes proteolytic processing by caspase-3 (CASP3), leading to its activation. In terms of processing, phosphorylation at Thr-375 activates the phospholipid scramblase activity.

The protein resides in the cell membrane. Its subcellular location is the cytoplasm. The protein localises to the perinuclear region. The enzyme catalyses a 1,2-diacyl-sn-glycero-3-phospho-L-serine(in) = a 1,2-diacyl-sn-glycero-3-phospho-L-serine(out). With respect to regulation, activated upon caspase cleavage to generate the XK-related protein 8, processed form. Does not act prior the onset of apoptosis. Phospholipid scramblase that promotes phosphatidylserine exposure on apoptotic cell surface. Phosphatidylserine is a specific marker only present at the surface of apoptotic cells and acts as a specific signal for engulfment. Required for the clearance of apoptotic cells, such as engulfment of apoptotic germ cells by Sertoli cells, clearance of senescent neutrophils or regulation of bipolar cell numbers in the retina. Has no effect on calcium-induced exposure of phosphatidylserine. Promotes myoblast differentiation and survival. This chain is XK-related protein 8, found in Pan troglodytes (Chimpanzee).